The sequence spans 532 residues: MSSQLAPIPILNQNASEERGEIARLSSFVGAIAITDLVKTTLGPKGMDKILISASNPNELIITNDGATILTKIYIDNPAAKILVDISRTQDDEVGDGTTSVCVLAGELLREGERLVQQKVHPQTIISGWRLALETARAALQSSTQDHSSDKVKFREDLLNIARTTLSSKILHTEKDHFANMVVDAVLRLNGNTNLDNIHIIKKSGGSLRESYLDEGFILEKKIGVGCPKRLENPKILIANTAMDTDKIKIFGGKVVVDSMTELAKMEDAEKEKMLNKCKKIVDHGINCFVNRQLVYNLPEQYFAEHGVMSIEHADFDGIERLALVTGAEIVSTFDHPELVKIGTCKLIEEVMIGEDKVIRFSGIPSGEACTIVLRGATSHILEEAERSIHDALCVLAVTVAETRTVLGAGCSEMIMSKAVDELAAITPGKKAMAIESFAKALRQIPTIIANNAGYDSSELVSQLKAAHHQGDKKAGLNMRDGCIGNAEELGVIESFKVKQQVLVSAHEAAEMIMRVDDILRAAPRQRSNLQH.

Belongs to the TCP-1 chaperonin family. In terms of assembly, heterooligomeric complex of about 850 to 900 kDa that forms two stacked rings, 12 to 16 nm in diameter.

It localises to the cytoplasm. In terms of biological role, molecular chaperone; assists the folding of proteins upon ATP hydrolysis. Known to play a role, in vitro, in the folding of actin and tubulin. This is T-complex protein 1 subunit beta (cct2) from Dictyostelium discoideum (Social amoeba).